A 690-amino-acid polypeptide reads, in one-letter code: Putative glycerophosphocholine phosphodiesterase GPCPD1 homolog 1 (690 aa).

The region spanning 1 to 122 (MDQDYKAHFK…RKNITDQFGS (122 aa)) is the CBM20 domain. The region spanning 344–654 (MLQIGHRGMG…DRIGEDEVLK (311 aa)) is the GP-PDE domain. The tract at residues 670-690 (ARSQHNSRSPSMSRRCMSTVE) is disordered. A compositionally biased stretch (low complexity) spans 676–690 (SRSPSMSRRCMSTVE).

The protein belongs to the glycerophosphoryl diester phosphodiesterase family.

This chain is Putative glycerophosphocholine phosphodiesterase GPCPD1 homolog 1, found in Caenorhabditis elegans.